A 411-amino-acid chain; its full sequence is UPF0761 membrane protein PA14_51960 (411 aa).

A run of 6 helical transmembrane segments spans residues 36–56 (LFAV…IPAF), 92–112 (HLTW…LVTI), 132–152 (FLLY…GFAV), 174–194 (LLGL…YSAV), 207–229 (GGVF…VSLF), and 244–264 (IFLL…VLVC).

It belongs to the UPF0761 family.

It is found in the cell inner membrane. The polypeptide is UPF0761 membrane protein PA14_51960 (Pseudomonas aeruginosa (strain UCBPP-PA14)).